We begin with the raw amino-acid sequence, 194 residues long: MHILTAGVDEAGRGPLVGSVFAAAVILPEIFDLPGLTDSKKLSEKKRDALAEMIKNQAVAWHVAAAGPEEIASLNILHATMLAMKRAVDGLAVRPEKIFIDGNRIPEHLNIPAEAVVKGDSKIIEISAASVLAKTARDAEMYALAQRHPQYGFDKHKGYGTKQHLEALEKYGVLPEHRRDFAPVRNLFAQQALF.

Residues 3-193 form the RNase H type-2 domain; sequence ILTAGVDEAG…VRNLFAQQAL (191 aa). A divalent metal cation-binding residues include D9, E10, and D101.

This sequence belongs to the RNase HII family. Mn(2+) serves as cofactor. It depends on Mg(2+) as a cofactor.

Its subcellular location is the cytoplasm. The enzyme catalyses Endonucleolytic cleavage to 5'-phosphomonoester.. Its function is as follows. Endonuclease that specifically degrades the RNA of RNA-DNA hybrids. In Neisseria meningitidis serogroup C / serotype 2a (strain ATCC 700532 / DSM 15464 / FAM18), this protein is Ribonuclease HII.